The following is a 270-amino-acid chain: Zinc finger protein ZAT2 (270 aa).

Composition is skewed to polar residues over residues 1–28 (MSNT…YNQN) and 36–48 (LTNN…SSSP). The disordered stretch occupies residues 1-64 (MSNTSNSDPN…QPDPDASQIA (64 aa)). The C2H2-type 1 zinc-finger motif lies at 65–87 (RPCTECGKQFGSLKALFGHMRCH). The tract at residues 95-119 (INPPSNFKRRINSNAASSSSSWDPS) is disordered. Low complexity predominate over residues 106-115 (NSNAASSSSS). 2 C2H2-type zinc fingers span residues 148 to 170 (FECD…RATH) and 211 to 233 (HRCN…MRCH).

Interacts (via the EAR motif) with TPL. In terms of tissue distribution, expressed exclusively in pollen.

The protein resides in the nucleus. Functionally, mediates the regulation of male germ cell division by DUO1. The sequence is that of Zinc finger protein ZAT2 from Arabidopsis thaliana (Mouse-ear cress).